A 58-amino-acid chain; its full sequence is Large ribosomal subunit protein uL30 (58 aa).

It belongs to the universal ribosomal protein uL30 family. Part of the 50S ribosomal subunit.

The polypeptide is Large ribosomal subunit protein uL30 (Erythrobacter litoralis (strain HTCC2594)).